The primary structure comprises 406 residues: 4-hydroxy-3-methylbut-2-en-1-yl diphosphate synthase (ferredoxin) (406 aa).

The [4Fe-4S] cluster site is built by Cys-313, Cys-316, Cys-347, and Glu-354.

Belongs to the IspG family. [4Fe-4S] cluster is required as a cofactor.

The catalysed reaction is (2E)-4-hydroxy-3-methylbut-2-enyl diphosphate + 2 oxidized [2Fe-2S]-[ferredoxin] + H2O = 2-C-methyl-D-erythritol 2,4-cyclic diphosphate + 2 reduced [2Fe-2S]-[ferredoxin] + H(+). It functions in the pathway isoprenoid biosynthesis; isopentenyl diphosphate biosynthesis via DXP pathway; isopentenyl diphosphate from 1-deoxy-D-xylulose 5-phosphate: step 5/6. Functionally, converts 2C-methyl-D-erythritol 2,4-cyclodiphosphate (ME-2,4cPP) into 1-hydroxy-2-methyl-2-(E)-butenyl 4-diphosphate. This Picosynechococcus sp. (strain ATCC 27264 / PCC 7002 / PR-6) (Agmenellum quadruplicatum) protein is 4-hydroxy-3-methylbut-2-en-1-yl diphosphate synthase (ferredoxin).